The following is a 113-amino-acid chain: Bactofilin BacN (113 aa).

It belongs to the bactofilin family. In terms of assembly, interacts with BacO and BacP, the 3 proteins colocalize as an extended structure.

It is found in the cytoplasm. Its subcellular location is the cytoskeleton. Functionally, a non-essential component of the chromosome segregation machinery. Positions the ParA-ParB-parS chromosome segregation machinery within the cell; BacP seems to be the most important bactofilin in this process. Forms a heteropolymeric, subpolar scaffold in the cell; BacP probably forms the core, BacO contributes to position and integrity while BacN does not seem to contribute to assembly. This chain is Bactofilin BacN, found in Myxococcus xanthus (strain DK1622).